Here is a 219-residue protein sequence, read N- to C-terminus: Uracil-DNA glycosylase (219 aa).

Residue D61 is the Proton acceptor of the active site.

It belongs to the uracil-DNA glycosylase (UDG) superfamily. UNG family.

The protein resides in the cytoplasm. The catalysed reaction is Hydrolyzes single-stranded DNA or mismatched double-stranded DNA and polynucleotides, releasing free uracil.. In terms of biological role, excises uracil residues from the DNA which can arise as a result of misincorporation of dUMP residues by DNA polymerase or due to deamination of cytosine. The protein is Uracil-DNA glycosylase of Neisseria gonorrhoeae (strain ATCC 700825 / FA 1090).